The primary structure comprises 691 residues: DNA ligase (691 aa).

A disordered region spans residues 1–22 (MTTAEDVAGNPYISDPRTDFES). NAD(+) is bound by residues 59 to 63 (DRAYD), 107 to 108 (SI), and Glu137. Catalysis depends on Lys139, which acts as the N6-AMP-lysine intermediate. NAD(+) is bound by residues Arg160, Glu196, Lys311, and Lys335. Zn(2+) contacts are provided by Cys426, Cys429, Cys442, and Cys448. Residues 608–691 (TDGDALDGQT…EELLDDAGVL (84 aa)) enclose the BRCT domain. Residues 637–667 (ERNDGSATSSVSGNTDYLVLGDNPGQRKQDD) are disordered. A compositionally biased stretch (polar residues) spans 641–651 (GSATSSVSGNT).

Belongs to the NAD-dependent DNA ligase family. LigA subfamily. It depends on Mg(2+) as a cofactor. The cofactor is Mn(2+).

It carries out the reaction NAD(+) + (deoxyribonucleotide)n-3'-hydroxyl + 5'-phospho-(deoxyribonucleotide)m = (deoxyribonucleotide)n+m + AMP + beta-nicotinamide D-nucleotide.. In terms of biological role, DNA ligase that catalyzes the formation of phosphodiester linkages between 5'-phosphoryl and 3'-hydroxyl groups in double-stranded DNA using NAD as a coenzyme and as the energy source for the reaction. It is essential for DNA replication and repair of damaged DNA. This Haloarcula marismortui (strain ATCC 43049 / DSM 3752 / JCM 8966 / VKM B-1809) (Halobacterium marismortui) protein is DNA ligase.